The chain runs to 166 residues: Urease accessory protein UreE (166 aa).

The disordered stretch occupies residues Phe-132–Pro-156.

This sequence belongs to the UreE family.

The protein localises to the cytoplasm. Functionally, involved in urease metallocenter assembly. Binds nickel. Probably functions as a nickel donor during metallocenter assembly. The protein is Urease accessory protein UreE of Pseudomonas fluorescens (strain ATCC BAA-477 / NRRL B-23932 / Pf-5).